A 476-amino-acid polypeptide reads, in one-letter code: Glucose-1-phosphate adenylyltransferase (476 aa).

Alpha-D-glucose 1-phosphate is bound by residues tyrosine 114, glycine 179, 194-195 (EK), and serine 212.

This sequence belongs to the bacterial/plant glucose-1-phosphate adenylyltransferase family. As to quaternary structure, homotetramer.

It carries out the reaction alpha-D-glucose 1-phosphate + ATP + H(+) = ADP-alpha-D-glucose + diphosphate. The protein operates within glycan biosynthesis; glycogen biosynthesis. Functionally, involved in the biosynthesis of ADP-glucose, a building block required for the elongation reactions to produce glycogen. Catalyzes the reaction between ATP and alpha-D-glucose 1-phosphate (G1P) to produce pyrophosphate and ADP-Glc. The sequence is that of Glucose-1-phosphate adenylyltransferase from Yersinia pestis bv. Antiqua (strain Antiqua).